Reading from the N-terminus, the 116-residue chain is Large ribosomal subunit protein uL18 (116 aa).

The protein belongs to the universal ribosomal protein uL18 family. As to quaternary structure, part of the 50S ribosomal subunit; part of the 5S rRNA/L5/L18/L25 subcomplex. Contacts the 5S and 23S rRNAs.

In terms of biological role, this is one of the proteins that bind and probably mediate the attachment of the 5S RNA into the large ribosomal subunit, where it forms part of the central protuberance. This Chromohalobacter salexigens (strain ATCC BAA-138 / DSM 3043 / CIP 106854 / NCIMB 13768 / 1H11) protein is Large ribosomal subunit protein uL18.